Here is a 545-residue protein sequence, read N- to C-terminus: Chaperonin GroEL 2 (545 aa).

Residues T29 to P32, D86 to T90, G413, N479 to A481, and D495 contribute to the ATP site.

This sequence belongs to the chaperonin (HSP60) family. Forms a cylinder of 14 subunits composed of two heptameric rings stacked back-to-back. Interacts with the co-chaperonin GroES.

It localises to the cytoplasm. The catalysed reaction is ATP + H2O + a folded polypeptide = ADP + phosphate + an unfolded polypeptide.. In terms of biological role, together with its co-chaperonin GroES, plays an essential role in assisting protein folding. The GroEL-GroES system forms a nano-cage that allows encapsulation of the non-native substrate proteins and provides a physical environment optimized to promote and accelerate protein folding. The sequence is that of Chaperonin GroEL 2 from Prochlorococcus marinus (strain SARG / CCMP1375 / SS120).